A 538-amino-acid polypeptide reads, in one-letter code: Protein BFR2 (538 aa).

The disordered stretch occupies residues 1 to 239 (MVKAKGRAKE…AKPMMAALST (239 aa)). A compositionally biased stretch (basic and acidic residues) spans 7–23 (RAKEFQDPDEPITKDYD). Acidic residues-rich tracts occupy residues 80-105 (LEEE…PETA) and 172-222 (DSED…DEED). Residues 290–363 (YEAAEEAAIK…KWSRKVQSVN (74 aa)) are a coiled coil.

This sequence belongs to the AATF family.

Its subcellular location is the nucleus. It localises to the nucleolus. This chain is Protein BFR2 (BFR2), found in Gibberella zeae (strain ATCC MYA-4620 / CBS 123657 / FGSC 9075 / NRRL 31084 / PH-1) (Wheat head blight fungus).